The primary structure comprises 165 residues: 6,7-dimethyl-8-ribityllumazine synthase (165 aa).

5-amino-6-(D-ribitylamino)uracil contacts are provided by residues Phe22, Ser56–Glu58, and Ala80–Ile82. Glu85–Thr86 lines the (2S)-2-hydroxy-3-oxobutyl phosphate pocket. Residue His88 is the Proton donor of the active site. Phe113 lines the 5-amino-6-(D-ribitylamino)uracil pocket. A (2S)-2-hydroxy-3-oxobutyl phosphate-binding site is contributed by Arg127.

Belongs to the DMRL synthase family.

The enzyme catalyses (2S)-2-hydroxy-3-oxobutyl phosphate + 5-amino-6-(D-ribitylamino)uracil = 6,7-dimethyl-8-(1-D-ribityl)lumazine + phosphate + 2 H2O + H(+). The protein operates within cofactor biosynthesis; riboflavin biosynthesis; riboflavin from 2-hydroxy-3-oxobutyl phosphate and 5-amino-6-(D-ribitylamino)uracil: step 1/2. Catalyzes the formation of 6,7-dimethyl-8-ribityllumazine by condensation of 5-amino-6-(D-ribitylamino)uracil with 3,4-dihydroxy-2-butanone 4-phosphate. This is the penultimate step in the biosynthesis of riboflavin. The chain is 6,7-dimethyl-8-ribityllumazine synthase from Thermotoga sp. (strain RQ2).